A 228-amino-acid polypeptide reads, in one-letter code: Octanoyltransferase (228 aa).

The region spanning 31 to 212 (GETDGILILL…KFSEVFGIHF (182 aa)) is the BPL/LPL catalytic domain. Residues 76–83 (RGGKITFH), 143–145 (AIG), and 156–158 (GIA) contribute to the substrate site. Cys174 (acyl-thioester intermediate) is an active-site residue.

This sequence belongs to the LipB family.

It localises to the cytoplasm. It carries out the reaction octanoyl-[ACP] + L-lysyl-[protein] = N(6)-octanoyl-L-lysyl-[protein] + holo-[ACP] + H(+). It participates in protein modification; protein lipoylation via endogenous pathway; protein N(6)-(lipoyl)lysine from octanoyl-[acyl-carrier-protein]: step 1/2. Catalyzes the transfer of endogenously produced octanoic acid from octanoyl-acyl-carrier-protein onto the lipoyl domains of lipoate-dependent enzymes. Lipoyl-ACP can also act as a substrate although octanoyl-ACP is likely to be the physiological substrate. The polypeptide is Octanoyltransferase (Thermoanaerobacter pseudethanolicus (strain ATCC 33223 / 39E) (Clostridium thermohydrosulfuricum)).